Reading from the N-terminus, the 95-residue chain is Aspartyl/glutamyl-tRNA(Asn/Gln) amidotransferase subunit C (95 aa).

The protein belongs to the GatC family. In terms of assembly, heterotrimer of A, B and C subunits.

It catalyses the reaction L-glutamyl-tRNA(Gln) + L-glutamine + ATP + H2O = L-glutaminyl-tRNA(Gln) + L-glutamate + ADP + phosphate + H(+). It carries out the reaction L-aspartyl-tRNA(Asn) + L-glutamine + ATP + H2O = L-asparaginyl-tRNA(Asn) + L-glutamate + ADP + phosphate + 2 H(+). Its function is as follows. Allows the formation of correctly charged Asn-tRNA(Asn) or Gln-tRNA(Gln) through the transamidation of misacylated Asp-tRNA(Asn) or Glu-tRNA(Gln) in organisms which lack either or both of asparaginyl-tRNA or glutaminyl-tRNA synthetases. The reaction takes place in the presence of glutamine and ATP through an activated phospho-Asp-tRNA(Asn) or phospho-Glu-tRNA(Gln). The polypeptide is Aspartyl/glutamyl-tRNA(Asn/Gln) amidotransferase subunit C (Methylorubrum extorquens (strain CM4 / NCIMB 13688) (Methylobacterium extorquens)).